The primary structure comprises 321 residues: Electron transfer flavoprotein subunit alpha (321 aa).

Residues Arg-211, Ser-236, Arg-237, Gln-250, Val-251, Ser-254, Gly-255, Ser-270, Ser-272, Gln-274, His-275, Asn-289, Asp-307, and Ile-308 each contribute to the FAD site.

As to quaternary structure, heterodimer of an alpha and a beta subunit. Forms a ternary complex with trimethylamine dehydrogenase. FAD serves as cofactor.

Heterodimeric electron transfer flavoprotein that accepts electrons from trimethylamine dehydrogenase. It transfers the electrons to the main respiratory chain via ETF-ubiquinone oxidoreductase (ETF dehydrogenase). The protein is Electron transfer flavoprotein subunit alpha (etfA) of Methylophilus methylotrophus (Bacterium W3A1).